A 178-amino-acid chain; its full sequence is Caveolin-1 (178 aa).

Ser2 bears the N-acetylserine mark. Ser2 is subject to Phosphoserine. Positions Ser2–Val94 are required for homooligomerization. Residues Ser2–Ser104 lie on the Cytoplasmic side of the membrane. Residue Lys5 is modified to N6-acetyllysine; alternate. Lys5 participates in a covalent cross-link: Glycyl lysine isopeptide (Lys-Gly) (interchain with G-Cter in ubiquitin); alternate. The residue at position 6 (Tyr6) is a Phosphotyrosine. Ser9 is subject to Phosphoserine. Residue Tyr14 is modified to Phosphotyrosine; by ABL1. Tyr25 is subject to Phosphotyrosine. Glycyl lysine isopeptide (Lys-Gly) (interchain with G-Cter in ubiquitin) cross-links involve residues Lys26, Lys30, Lys39, Lys47, and Lys57. An interaction with CAVIN3 region spans residues Asp82 to Val94. Positions Ala105–Leu125 form an intramembrane region, helical. Residues His126 to Ile178 lie on the Cytoplasmic side of the membrane. The interval Val131–Gln142 is interacts with SPRY1, SPRY2, SPRY3 and SPRY4. Residues Cys133, Cys143, and Cys156 are each lipidated (S-palmitoyl cysteine). The segment at Ser149–Phe160 is interacts with SPRY1, SPRY2, and SPRY4. Residues Phe167 to Ile178 form an interacts with SPRY1, SPRY2, SPRY3 and SPRY4 region.

It belongs to the caveolin family. As to quaternary structure, homooligomer. Interacts (via the N-terminus) with DPP4; the interaction is direct. Forms a stable heterooligomeric complex with CAV2 that targets to lipid rafts and drives caveolae formation. Interacts with PACSIN2; this interaction induces membrane tubulation. Interacts with BMX, BTK, CTNNB1, CDH1, GLIPR2, JUP, NOSTRIN, SNAP25 and STX1A. Interacts with SLC7A9. Interacts with TGFBR1. Interacts with CAVIN3 (via leucine-zipper domain) in a cholesterol-sensitive manner. Interacts with CAVIN1. Interacts with EHD2 in a cholesterol-dependent manner. Forms a ternary complex with UBXN6 and VCP; mediates CAV1 targeting to lysosomes for degradation. Interacts with ABCG1; this interaction regulates ABCG1-mediated cholesterol efflux. Interacts with NEU3; this interaction enhances NEU3 sialidase activity within caveola. Interacts (via C-terminus) with SPRY1, SPRY2 (via C-terminus), SPRY3, and SPRY4. In terms of processing, phosphorylated at Tyr-14 by ABL1 in response to oxidative stress. Post-translationally, ubiquitinated. Undergo monoubiquitination and multi- and/or polyubiquitination. Monoubiquitination of N-terminal lysines promotes integration in a ternary complex with UBXN6 and VCP which promotes oligomeric CAV1 targeting to lysosomes for degradation. Ubiquitinated by ZNRF1; leading to degradation and modulation of the TLR4-mediated immune response.

The protein resides in the golgi apparatus membrane. The protein localises to the cell membrane. Its subcellular location is the membrane. It is found in the caveola. It localises to the membrane raft. Functionally, may act as a scaffolding protein within caveolar membranes. Forms a stable heterooligomeric complex with CAV2 that targets to lipid rafts and drives caveolae formation. Mediates the recruitment of CAVIN proteins (CAVIN1/2/3/4) to the caveolae. Interacts directly with G-protein alpha subunits and can functionally regulate their activity. Involved in the costimulatory signal essential for T-cell receptor (TCR)-mediated T-cell activation. Its binding to DPP4 induces T-cell proliferation and NF-kappa-B activation in a T-cell receptor/CD3-dependent manner. Recruits CTNNB1 to caveolar membranes and may regulate CTNNB1-mediated signaling through the Wnt pathway. Negatively regulates TGFB1-mediated activation of SMAD2/3 by mediating the internalization of TGFBR1 from membrane rafts leading to its subsequent degradation. Binds 20(S)-hydroxycholesterol (20(S)-OHC). The sequence is that of Caveolin-1 (CAV1) from Otolemur garnettii (Small-eared galago).